The following is a 1470-amino-acid chain: RNA-directed RNA polymerase VP1 (1470 aa).

Residues 28–55 (AKQDQKENETTSNNKDTSSSVPKPSNFR) form a disordered region. Positions 37–50 (TTSNNKDTSSSVPK) are enriched in polar residues.

It carries out the reaction RNA(n) + a ribonucleoside 5'-triphosphate = RNA(n+1) + diphosphate. Functionally, RNA-directed RNA polymerase that is involved in transcription and genome replication. Following infection, it catalyzes the synthesis of fully conservative plus strands. After core assembly, which consists in recruitment of one capped plus-strand for each genomic segments and polymerase complexes, the polymerase switches mode and catalyzes the synthesis of complementary minus-strands. This is RNA-directed RNA polymerase VP1 (S1) from Saccharum officinarum (Sugarcane).